The primary structure comprises 1371 residues: uncharacterized protein (1371 aa).

The tract at residues Trp1020–Pro1048 is disordered. The segment covering Pro1029–Leu1046 has biased composition (basic and acidic residues). An Autotransporter domain is found at Gly1083–Phe1371.

It localises to the cell outer membrane. This is an uncharacterized protein from Escherichia coli (strain K12).